The chain runs to 748 residues: Phosphoenolpyruvate-dependent phosphotransferase system (748 aa).

The 127-residue stretch at 1 to 127 folds into the GAF domain; the sequence is MLTRLREIVE…RRQLLGVLVV (127 aa). The linker stretch occupies residues 128 to 170; that stretch reads QQRELRQYDESEESFLVTLATQMAAILSQSQLTALFGQYRQTR. Positions 171 to 748 are PTS EI; the sequence is IRALPAAPGV…GMGGLIRGGL (578 aa). Catalysis depends on H356, which acts as the Tele-phosphohistidine intermediate. Residues R462 and R498 each coordinate phosphoenolpyruvate. E597 and D621 together coordinate Mg(2+). Phosphoenolpyruvate contacts are provided by residues 620-621 and R631; that span reads ND. Residue C668 is the Proton donor of the active site.

The protein belongs to the PEP-utilizing enzyme family. Mg(2+) is required as a cofactor.

It is found in the cytoplasm. It catalyses the reaction L-histidyl-[protein] + phosphoenolpyruvate = N(pros)-phospho-L-histidyl-[protein] + pyruvate. Inhibited by GDP and FAD. Component of the phosphoenolpyruvate-dependent nitrogen-metabolic phosphotransferase system (nitrogen-metabolic PTS), that seems to be involved in regulating nitrogen metabolism. Enzyme I-Ntr transfers the phosphoryl group from phosphoenolpyruvate (PEP) to the phosphoryl carrier protein (NPr). Could function in the transcriptional regulation of sigma-54 dependent operons in conjunction with the NPr (PtsO) and EIIA-Ntr (PtsN) proteins. Enzyme I-Ntr is specific for NPr. The chain is Phosphoenolpyruvate-dependent phosphotransferase system (ptsP) from Escherichia coli (strain K12).